Here is a 141-residue protein sequence, read N- to C-terminus: Protein stum homolog (141 aa).

S26 bears the Phosphoserine mark. 2 consecutive transmembrane segments (helical) span residues 51-71 and 87-107; these read FPVA…GTFV and RHVC…ILTA.

This sequence belongs to the SPEC3 family. Stum subfamily.

The protein localises to the membrane. The protein is Protein stum homolog of Homo sapiens (Human).